Here is a 351-residue protein sequence, read N- to C-terminus: Magnesium-protoporphyrin IX monomethyl ester [oxidative] cyclase 1 (351 aa).

This sequence belongs to the AcsF family. Requires Fe cation as cofactor.

The catalysed reaction is Mg-protoporphyrin IX 13-monomethyl ester + 3 NADPH + 3 O2 + 2 H(+) = 3,8-divinyl protochlorophyllide a + 3 NADP(+) + 5 H2O. The protein operates within porphyrin-containing compound metabolism; chlorophyll biosynthesis (light-independent). Functionally, catalyzes the formation of the isocyclic ring in chlorophyll biosynthesis. Mediates the cyclase reaction, which results in the formation of divinylprotochlorophyllide (Pchlide) characteristic of all chlorophylls from magnesium-protoporphyrin IX 13-monomethyl ester (MgPMME). In Nostoc sp. (strain PCC 7120 / SAG 25.82 / UTEX 2576), this protein is Magnesium-protoporphyrin IX monomethyl ester [oxidative] cyclase 1.